We begin with the raw amino-acid sequence, 104 residues long: Integration host factor subunit alpha (104 aa).

The segment at 51–70 (GNFQLRDKPQRPGRNPKTGE) is disordered.

The protein belongs to the bacterial histone-like protein family. In terms of assembly, heterodimer of an alpha and a beta chain.

This protein is one of the two subunits of integration host factor, a specific DNA-binding protein that functions in genetic recombination as well as in transcriptional and translational control. The sequence is that of Integration host factor subunit alpha from Ralstonia nicotianae (strain ATCC BAA-1114 / GMI1000) (Ralstonia solanacearum).